A 1534-amino-acid polypeptide reads, in one-letter code: Ribosome-binding protein 1 (1534 aa).

The Lumenal segment spans residues 1–7 (MDIYDTQ). Residues 8-28 (TLGVMVFGGFMVVSAIGIFLV) traverse the membrane as a helical segment. Residues 29–1534 (STFSMKETSY…DSSSKEGTSV (1506 aa)) lie on the Cytoplasmic side of the membrane. 2 disordered regions span residues 45-91 (QRKE…PAPN) and 125-152 (PAMPQEKLAPSPKDKKKKEKKVAKVEPA). Residues 52 to 63 (THHQKVEKKKKE) show a composition bias toward basic residues. The span at 64 to 88 (KTVEKKGKTKKKEEKPNGKIPDHEP) shows a compositional bias: basic and acidic residues. The span at 125-135 (PAMPQEKLAPS) shows a compositional bias: low complexity. Residue K148 forms a Glycyl lysine isopeptide (Lys-Gly) (interchain with G-Cter in SUMO2) linkage. Phosphoserine is present on residues S159 and S165. Disordered stretches follow at residues 173–780 (APKE…PLYL), 968–987 (KELVEKSEAARQEEQQRKAL), and 1021–1082 (RELC…RAEN). Positions 175–194 (KEVPMVVVPPVGAKAGTPAT) are enriched in low complexity. 54 tandem repeats follow at residues 197–206 (AQGKKAEGAQ), 207–216 (NQSRKAEGAP), 217–226 (NQGKKAEGAL), 227–236 (NQGKKAEGAQ), 237–246 (NQGKKVEVAP), 247–256 (NQGKKAEGGQ), 257–266 (NQGKKVEGAQ), 267–276 (NQGKKAEGTP), 277–286 (NQGKKAEGAP), 287–296 (NQGKKTDGAP), 297–306 (NQGKKSEGAP), 307–316 (NQGKKAEGAQ), 317–326 (NQGKKVEVAP), 327–336 (NQGKKAEGGQ), 337–346 (NQGKKVEGAQ), 347–356 (NQGKKAEGTP), 357–366 (NQGKKAEGAP), 367–376 (NQGKKTDGAP), 377–386 (NQGKKSEGAP), 387–396 (NQGKKVEGAQ), 397–406 (NQGKKVEGVQ), 407–416 (NQGKKAEGAQ), 417–426 (NQGKKAEGTS), 427–436 (SQGRKEEGTP), 437–446 (NLGKKAEGSP), 447–456 (NQGKKVEVVQ), 457–466 (NQSKKVEGAP), 467–476 (NQGKKAEGSQ), 477–486 (NQGKKTEGAS), 487–496 (NQGKKVDGAQ), 497–506 (NQGKKAEGAP), 507–516 (NQGKKVEGAQ), 517–526 (NQGKKAEGTP), 527–536 (NQGKKAEGAQ), 537–546 (NQGKKAEGAP), 547–556 (NQGKKAEGAP), 557–566 (NQGKKAEGAP), 567–576 (NQGKKAEGAP), 577–586 (NQGKKAEAAP), 587–596 (NQGKKAEGAP), 597–606 (NQGKKAEGAP), 607–616 (NQGKKAEAAP), 617–626 (NQGKKAEGAP), 627–636 (NQGKKAEGAP), 637–646 (NQGKKAEGAP), 647–656 (NQGKKAEGAQ), 657–666 (NQGKKAEGAP), 667–676 (NQGKKADLVA), 677–686 (NQGTKAEGVA), 687–696 (GQGKKAEGAP), 697–706 (NQGKKGEGTP), 707–716 (NQGKKSEGSP), 717–726 (NQGKKVDASA), and 727–736 (NQSKRAESAP). Residues 197–736 (AQGKKAEGAQ…NQSKRAESAP (540 aa)) form a 54 X 10 AA tandem repeats of [NASG]-[QL]-[GS]-[KRT]-[KR]-[AVTSEG]-[ED]-[AGVLS]-[ATGSV]-[PQLSA] region. The residue at position 275 (T275) is a Phosphothreonine. Positions 395 to 428 (AQNQGKKVEGVQNQGKKAEGAQNQGKKAEGTSSQ) are enriched in polar residues. The segment covering 474 to 499 (GSQNQGKKTEGASNQGKKVDGAQNQG) has biased composition (polar residues). A compositionally biased stretch (polar residues) spans 705–718 (TPNQGKKSEGSPNQ). S715 bears the Phosphoserine mark. The residue at position 747 (S747) is a Phosphoserine. A Glycyl lysine isopeptide (Lys-Gly) (interchain with G-Cter in SUMO1) cross-link involves residue K752. S1032 is subject to Phosphoserine. The span at 1059-1080 (AEVKSKSEELSGLHGQLKEARA) shows a compositional bias: basic and acidic residues. N6-acetyllysine is present on K1064. Phosphoserine occurs at positions 1091 and 1110. Disordered stretches follow at residues 1224–1251 (ELLKQRPADTDPSSDLASKLREAEETQN), 1391–1416 (KSHVEDGDVAGSPAAPPAEQDPVELK), and 1509–1534 (ERDTVKKLQEQLDKTDDSSSKEGTSV). The segment covering 1509-1528 (ERDTVKKLQEQLDKTDDSSS) has biased composition (basic and acidic residues).

Its subcellular location is the endoplasmic reticulum membrane. Its function is as follows. Acts as a ribosome receptor and mediates interaction between the ribosome and the endoplasmic reticulum membrane. In Canis lupus familiaris (Dog), this protein is Ribosome-binding protein 1 (RRBP1).